The chain runs to 500 residues: Protein PIGMENT DEFECTIVE 338, chloroplastic (500 aa).

Residues 1–63 (MQTLLCQPCK…FAFRGFSICR (63 aa)) constitute a chloroplast transit peptide. S1 motif domains follow at residues 156–265 (KPGD…LSSR), 283–351 (NEPI…LSEK), and 362–431 (GTLL…LSIA).

Belongs to the bacterial ribosomal protein bS1 family. As to quaternary structure, interacts with CRP1 and PRFB3. In terms of tissue distribution, present in leaves (at protein level). Confined to leaf chlorenchyma cells.

Its subcellular location is the plastid. The protein localises to the chloroplast. RNA-binding protein that acts as an RNA chaperone to remodel RNA structure and activates their translation. Required for seed pigmentation. Necessary for chloroplast development and subsequent photosynthetic electron flow, as well as for non-photochemical quenching (NPQ). Rubisco regulatory factor which regulates the concerted biogenesis of NDH, PSI (including PsaA, PsaB, PsaD, PsaF, PsaL, PsaG, PsaK and NdhH) and Cytb(6)f (including PetA, PetB, PetC and PetD) complexes. Binds specifically to and involved in the post-transcriptional regulation of plastid-encoded mRNAs (e.g. rbcL, petA, petB, petD and Ycf1), thus modulating expression, cellular localization/compartmentalization, and photosynthetic function. This is Protein PIGMENT DEFECTIVE 338, chloroplastic from Arabidopsis thaliana (Mouse-ear cress).